The primary structure comprises 382 residues: Dual-specificity RNA methyltransferase RlmN (382 aa).

Residue Glu-96 is the Proton acceptor of the active site. The 241-residue stretch at 102–342 folds into the Radical SAM core domain; the sequence is QGKRGTLCVS…VRTTRGEDID (241 aa). Residues Cys-109 and Cys-345 are joined by a disulfide bond. Residues Cys-116, Cys-120, and Cys-123 each coordinate [4Fe-4S] cluster. S-adenosyl-L-methionine contacts are provided by residues 170–171, Ser-202, 224–226, and Asn-302; these read GE and SLH. Catalysis depends on Cys-345, which acts as the S-methylcysteine intermediate.

This sequence belongs to the radical SAM superfamily. RlmN family. [4Fe-4S] cluster serves as cofactor.

The protein resides in the cytoplasm. The enzyme catalyses adenosine(2503) in 23S rRNA + 2 reduced [2Fe-2S]-[ferredoxin] + 2 S-adenosyl-L-methionine = 2-methyladenosine(2503) in 23S rRNA + 5'-deoxyadenosine + L-methionine + 2 oxidized [2Fe-2S]-[ferredoxin] + S-adenosyl-L-homocysteine. It catalyses the reaction adenosine(37) in tRNA + 2 reduced [2Fe-2S]-[ferredoxin] + 2 S-adenosyl-L-methionine = 2-methyladenosine(37) in tRNA + 5'-deoxyadenosine + L-methionine + 2 oxidized [2Fe-2S]-[ferredoxin] + S-adenosyl-L-homocysteine. In terms of biological role, specifically methylates position 2 of adenine 2503 in 23S rRNA and position 2 of adenine 37 in tRNAs. m2A2503 modification seems to play a crucial role in the proofreading step occurring at the peptidyl transferase center and thus would serve to optimize ribosomal fidelity. This chain is Dual-specificity RNA methyltransferase RlmN, found in Pseudomonas fluorescens (strain SBW25).